The sequence spans 688 residues: Protein sel-1 homolog 2 (688 aa).

Positions 1–18 are cleaved as a signal peptide; the sequence is MNPLALLVEILIIIEVTT. Residues 19 to 662 are Extracellular-facing; it reads KNSEAERYNR…KWKWLKLDST (644 aa). N-linked (GlcNAc...) asparagine glycosylation is present at asparagine 34. Sel1-like repeat units follow at residues 107–142, 143–178, 179–214, 215–250, 297–333, 334–370, 371–406, 407–442, 443–478, 551–586, and 588–623; these read GDELFKMGNKILQESKSQKQKTEAYTFFTRAADMGN, LKAMEKMADALLFGSFGMQNITAAIQLYESLAKEGS, YKAQNALGFLSSYGIGMEYDQAKALIYYTFGSAGGS, MMSQMILGYRYLSGINVLQNCEVALNHYKKVADYIA, VQIQVSLGQLHLIGRKGLDQDYSKALYYFLKAAKAGS, ANAMAFIGKMYLEGNAAAPQNNATAFKYFSMAASKGN, AIGLHGLGLLYFHGKGVPVNYGEALKYFQKAAEKGW, PNAQFHLGFMYYSGSGVWKDYKLAFKYFYLASQSGQ, PLAIYYLAEMYATGTGVLRSCRTAVEPYKGVCELGH, AFARVKIGDYHYYGYGTKKDYETAATHYSIAADKHH, and AQAMFNLAYMYEHGLGIAQDIHLARRLYDMAAQTSP. The N-linked (GlcNAc...) asparagine glycan is linked to asparagine 162. The chain crosses the membrane as a helical span at residues 663–683; that stretch reads IGPYWDLLVIGLIVVVLIFLL. Residues 684–688 lie on the Cytoplasmic side of the membrane; that stretch reads RNHHR.

This sequence belongs to the sel-1 family.

The protein resides in the membrane. The protein localises to the cell projection. It localises to the cilium. Its subcellular location is the nucleus speckle. This Rattus norvegicus (Rat) protein is Protein sel-1 homolog 2 (Sel1l2).